The chain runs to 495 residues: Myocyte-specific enhancer factor 2A (495 aa).

The 55-residue stretch at 3–57 (RKKIQITRIMDERNRQVTFTKRKFGLMKKAYELSVLCDCEIALIIFNSSNKLFQY) folds into the MADS-box domain. Residues 58 to 86 (ASTDMDKVLLKYTEYNEPHESRTNSDIVE) constitute a DNA-binding region (mef2-type). Serine 59 is modified (phosphoserine; by CK2). Residue serine 98 is modified to Phosphoserine. The tract at residues 175–225 (AESSMLSPPPATLHRNVSPGAPQRPPSTGSAGGMLSTTDLTVPNGAGNGPV) is disordered. Residue serine 235 is modified to Phosphoserine. The tract at residues 242-271 (TGANSVGKVMPTKSPPPPGGGSVGMNSRKP) is disordered. Lysine 249 is subject to N6-acetyllysine. Serine 255 carries the phosphoserine modification. The tract at residues 266-283 (MNSRKPDLRVVIPPSSKG) is required for interaction with MAPKs. Phosphothreonine; by MAPK7 and MAPK14 occurs at positions 304 and 311. Position 347 is a phosphoserine; by MAPK7 (serine 347). Residues 382–394 (SNLSINTNQNINI) show a composition bias toward polar residues. The segment at 382-495 (SNLSINTNQN…KRMRMDTWVT (114 aa)) is disordered. Lysine 395 carries the post-translational modification N6-acetyllysine; alternate. A Glycyl lysine isopeptide (Lys-Gly) (interchain with G-Cter in SUMO); alternate cross-link involves residue lysine 395. Serine 400 carries the phosphoserine; by CDK5 modification. Position 407 is a phosphothreonine (threonine 407). Residues 421–433 (QQPPPQPPQPQPQ) show a composition bias toward pro residues. Serine 441 is modified (phosphoserine). A compositionally biased stretch (low complexity) spans 441 to 454 (SPVDSLSSSSSSYD). Composition is skewed to basic and acidic residues over residues 455–465 (GSDREDPRGDF) and 476–495 (NAED…TWVT).

In terms of assembly, binds DNA as a homo- or heterodimer. Dimerizes with MEF2D. Interacts with HDAC7. Interacts with PIAS1; the interaction enhances sumoylation. Interacts with HDAC4, HDAC9 and SLC2A4RG. Interacts (via the N-terminal) with MAPK7; the interaction results in the phosphorylation and transcriptional activity of MEF2A. Constitutive phosphorylation on Ser-400 promotes Lys-395 sumoylation thus preventing acetylation at this site. Dephosphorylation on Ser-400 by PPP3CA upon neuron depolarization promotes a switch from sumoylation to acetylation on residue Lys-395 leading to inhibition of dendrite claw differentiation. Phosphorylation on Thr-304 and Thr-311 are the main sites involved in p38 MAPK signaling and activate transcription. Phosphorylated on these sites by MAPK14/p38alpha and MAPK11/p38beta, but not by MAPK13/p38delta nor by MAPK12/p38gamma. Phosphorylation on Ser-400 by CDK5 induced by neurotoxicity inhibits MEF2A transcriptional activation leading to apoptosis of cortical neurons. Phosphorylation on Thr-304, Thr-311 and Ser-347 can be induced by EGF. Post-translationally, sumoylation on Lys-395 is enhanced by PIAS1 and represses transcriptional activity. Phosphorylation on Ser-400 is required for sumoylation. Has no effect on nuclear location nor on DNA binding. Sumoylated with SUMO1 and, to a lesser extent with SUMO2 and SUMO3. PIASx facilitates sumoylation in postsynaptic dendrites in the cerebellar cortex and promotes their morphogenesis. In terms of processing, acetylation on Lys-395 activates transcriptional activity. Acetylated by p300 on several sites in diffentiating myocytes. Acetylation on Lys-4 increases DNA binding and transactivation. Hyperacetylation by p300 leads to enhanced cardiac myocyte growth and heart failure. Proteolytically cleaved in cerebellar granule neurons on several sites by caspase 3 and caspase 7 following neurotoxicity. Preferentially cleaves the CDK5-mediated hyperphosphorylated form which leads to neuron apoptosis and transcriptional inactivation.

The protein localises to the nucleus. Transcriptional activator which binds specifically to the MEF2 element, 5'-YTA[AT](4)TAR-3', found in numerous muscle-specific genes. Also involved in the activation of numerous growth factor- and stress-induced genes. Mediates cellular functions not only in skeletal and cardiac muscle development, but also in neuronal differentiation and survival. Plays diverse roles in the control of cell growth, survival and apoptosis via p38 MAPK signaling in muscle-specific and/or growth factor-related transcription. In cerebellar granule neurons, phosphorylated and sumoylated MEF2A represses transcription of NUR77 promoting synaptic differentiation. Associates with chromatin to the ZNF16 promoter. This chain is Myocyte-specific enhancer factor 2A (Mef2a), found in Rattus norvegicus (Rat).